A 352-amino-acid polypeptide reads, in one-letter code: Ion-translocating oxidoreductase complex subunit D (352 aa).

5 consecutive transmembrane segments (helical) span residues 20 to 40 (IMLL…WFFG), 42 to 62 (GTLV…ALVL), 78 to 109 (ALLT…VIIA), 123 to 143 (PAMI…TSWL), and 148 to 168 (IAVN…GHIT). An FMN phosphoryl threonine modification is found at T187. The next 5 membrane-spanning stretches (helical) occupy residues 215 to 235 (LAGV…VWLL), 242 to 262 (WHIP…GWLF), 267 to 287 (LAAP…FFIL), 301 to 321 (LIFG…GGYP), and 322 to 342 (DGVA…DYYT).

The protein belongs to the NqrB/RnfD family. As to quaternary structure, the complex is composed of six subunits: RsxA, RsxB, RsxC, RsxD, RsxE and RsxG. FMN is required as a cofactor.

The protein resides in the cell inner membrane. Functionally, part of a membrane-bound complex that couples electron transfer with translocation of ions across the membrane. Required to maintain the reduced state of SoxR. The protein is Ion-translocating oxidoreductase complex subunit D of Escherichia coli (strain SMS-3-5 / SECEC).